Reading from the N-terminus, the 248-residue chain is PF03932 family protein CutC (248 aa).

This sequence belongs to the CutC family. Homodimer.

It is found in the cytoplasm. This Salmonella schwarzengrund (strain CVM19633) protein is PF03932 family protein CutC.